Consider the following 317-residue polypeptide: Ribosomal RNA large subunit methyltransferase F (317 aa).

Belongs to the methyltransferase superfamily. METTL16/RlmF family.

The protein localises to the cytoplasm. The catalysed reaction is adenosine(1618) in 23S rRNA + S-adenosyl-L-methionine = N(6)-methyladenosine(1618) in 23S rRNA + S-adenosyl-L-homocysteine + H(+). Its function is as follows. Specifically methylates the adenine in position 1618 of 23S rRNA. The sequence is that of Ribosomal RNA large subunit methyltransferase F from Pseudomonas putida (strain ATCC 700007 / DSM 6899 / JCM 31910 / BCRC 17059 / LMG 24140 / F1).